The following is a 305-amino-acid chain: MQCEFKGVISALPTPYDQSQQIDMESLRKLIRFNIEQNIKGLYVGGSTGEAFLQNVAEREKILETVADESDGRLTLIAHVGGISTAESEVLAKAAKKYGYHAISAVTPFYYPFSFEEHCIHYRKIIDSADGLPMVVYNIPALSGVRFSLDQINELVTIPRVCALKQTSGDLFQMEQIKRNHPELVLYNGYDEIFASGLIAGADGGIGSTYNIMGWRYLEIFEAVKNNDVIKAKEMQVACNQVIDTLIQSGVLAGIKTLLYYMGIINTPVCRSPFSPVKEKNLDVLSKLAERLFEEHDRNKKMKII.

Aceneuramate-binding residues include Ser47 and Thr48. Catalysis depends on Tyr137, which acts as the Proton donor. Residue Lys165 is the Schiff-base intermediate with substrate of the active site. Aceneuramate contacts are provided by Thr167, Gly189, Asp191, Glu192, and Ser208.

The protein belongs to the DapA family. NanA subfamily. As to quaternary structure, homotetramer.

The protein resides in the cytoplasm. The catalysed reaction is aceneuramate = aldehydo-N-acetyl-D-mannosamine + pyruvate. It participates in amino-sugar metabolism; N-acetylneuraminate degradation; D-fructose 6-phosphate from N-acetylneuraminate: step 1/5. Functionally, catalyzes the reversible aldol cleavage of N-acetylneuraminic acid (sialic acid; Neu5Ac) to form pyruvate and N-acetylmannosamine (ManNAc) via a Schiff base intermediate. This chain is N-acetylneuraminate lyase 2, found in Escherichia coli O6:H1 (strain CFT073 / ATCC 700928 / UPEC).